A 151-amino-acid polypeptide reads, in one-letter code: Calmodulin (151 aa).

4 EF-hand domains span residues Glu10 to Asn45, Pro46 to Asp81, Asp83 to Lys118, and Leu119 to Lys151. Residues Asp23, Asp25, Asp27, Ser29, Glu34, Asp59, Asp61, Asn63, Thr65, Glu70, Asp96, Asp98, Asn100, Glu107, Asp132, Asp134, Asp136, and Glu143 each coordinate Ca(2+).

The protein belongs to the calmodulin family.

Its function is as follows. Calmodulin mediates the control of a large number of enzymes, ion channels and other proteins by Ca(2+). Among the enzymes to be stimulated by the calmodulin-Ca(2+) complex are a number of protein kinases and phosphatases. This is Calmodulin from Pneumocystis carinii.